The chain runs to 325 residues: Undecaprenyl-phosphate 4-deoxy-4-formamido-L-arabinose transferase (325 aa).

2 helical membrane passes run 236-256 (LSIF…LLIL) and 270-290 (VFTL…GMGL).

Belongs to the glycosyltransferase 2 family.

It is found in the cell inner membrane. The enzyme catalyses UDP-4-deoxy-4-formamido-beta-L-arabinose + di-trans,octa-cis-undecaprenyl phosphate = 4-deoxy-4-formamido-alpha-L-arabinopyranosyl di-trans,octa-cis-undecaprenyl phosphate + UDP. Its pathway is glycolipid biosynthesis; 4-amino-4-deoxy-alpha-L-arabinose undecaprenyl phosphate biosynthesis; 4-amino-4-deoxy-alpha-L-arabinose undecaprenyl phosphate from UDP-4-deoxy-4-formamido-beta-L-arabinose and undecaprenyl phosphate: step 1/2. The protein operates within bacterial outer membrane biogenesis; lipopolysaccharide biosynthesis. Its function is as follows. Catalyzes the transfer of 4-deoxy-4-formamido-L-arabinose from UDP to undecaprenyl phosphate. The modified arabinose is attached to lipid A and is required for resistance to polymyxin and cationic antimicrobial peptides. The protein is Undecaprenyl-phosphate 4-deoxy-4-formamido-L-arabinose transferase of Edwardsiella ictaluri (strain 93-146).